The sequence spans 250 residues: Proteasome subunit alpha type-4-2 (250 aa).

As to quaternary structure, the 26S proteasome consists of a 20S proteasome core and two 19S regulatory subunits. The 20S proteasome core is composed of 28 subunits that are arranged in four stacked rings, resulting in a barrel-shaped structure. The two end rings are each formed by seven alpha subunits, and the two central rings are each formed by seven beta subunits. The catalytic chamber with the active sites is on the inside of the barrel.

It localises to the cytoplasm. The protein localises to the nucleus. The proteasome is a multicatalytic proteinase complex which is characterized by its ability to cleave peptides with Arg, Phe, Tyr, Leu, and Glu adjacent to the leaving group at neutral or slightly basic pH. The proteasome has an ATP-dependent proteolytic activity. This is Proteasome subunit alpha type-4-2 from Oryza sativa subsp. indica (Rice).